The chain runs to 364 residues: Long-wave-sensitive opsin 1 (364 aa).

At 1 to 58 (MTQRWGPQRLAGGQPQAGLEESTQASIFTYTNSNATRDPFEGPNYHIAPRWVYHLTSA) the chain is on the extracellular side. The O-linked (GlcNAc) serine glycan is linked to Ser-22. Asn-34 carries N-linked (GlcNAc...) asparagine glycosylation. A helical membrane pass occupies residues 59–79 (WMIFVVIASVFTNGLVLVATM). Over 80–90 (RFKKLRHPLNW) the chain is Cytoplasmic. The helical transmembrane segment at 91-111 (ILVNLAIADLAETIIASTISV) threads the bilayer. Residues 112–126 (VNQIYGYFVLGHPLC) lie on the Extracellular side of the membrane. A disulfide bond links Cys-126 and Cys-203. A helical membrane pass occupies residues 127–147 (VVEGYTVSLCGITGLWSLAII). At 148-168 (SWERWLVVCKPFGNVRFDAKL) the chain is on the cytoplasmic side. A helical transmembrane segment spans residues 169–189 (AIAGIAFSWIWAAVWTAPPIF). The Extracellular segment spans residues 190-219 (GWSRYWPHGLKTSCGPDVFSGSSYPGVQSY). Residues 220–240 (MIVLMTTCCIIPLSVIILCYL) traverse the membrane as a helical segment. Residues 241–269 (QVWLAIRAVAKQQKESESTQKAEKEVTRM) lie on the Cytoplasmic side of the membrane. A helical membrane pass occupies residues 270–290 (VVVMVLAYCLCWGPYTFFACF). Residues 291-301 (AAAHPGYAFHP) lie on the Extracellular side of the membrane. Residues 302-324 (LVAALPAYFAKSATIYNPIIYVF) traverse the membrane as a helical segment. N6-(retinylidene)lysine is present on Lys-312. Over 325-364 (MNRQFRNCILQLFGKKVDDSSELSSASRTEASSVSSVSPA) the chain is Cytoplasmic.

Belongs to the G-protein coupled receptor 1 family. Opsin subfamily. In terms of processing, phosphorylated on some or all of the serine and threonine residues present in the C-terminal region. In terms of tissue distribution, the three color pigments are found in the cone photoreceptor cells.

It is found in the membrane. Its function is as follows. Visual pigments are the light-absorbing molecules that mediate vision. They consist of an apoprotein, opsin, covalently linked to cis-retinal. In Canis lupus familiaris (Dog), this protein is Long-wave-sensitive opsin 1 (OPN1LW).